The primary structure comprises 207 residues: Vexin (207 aa).

Residues 56–100 (ELLPHRGDRRDPGDRRRFGRLQTARPPTAHPAKASARPVGISEPK) form a disordered region. Positions 58 to 71 (LPHRGDRRDPGDRR) are enriched in basic and acidic residues.

It belongs to the vexin family.

The protein localises to the cell membrane. The protein resides in the nucleus. Its function is as follows. Required for neurogenesis in the neural plate and retina. Strongly cooperates with neural bHLH factors to promote neurogenesis. The polypeptide is Vexin (Homo sapiens (Human)).